The following is a 235-amino-acid chain: Glucosamine-6-phosphate deaminase (235 aa).

Aspartate 62 acts as the Proton acceptor; for enolization step in catalysis. Residue asparagine 128 is the For ring-opening step of the active site. The active-site Proton acceptor; for ring-opening step is histidine 130. Glutamate 135 serves as the catalytic For ring-opening step.

The protein belongs to the glucosamine/galactosamine-6-phosphate isomerase family. NagB subfamily.

The enzyme catalyses alpha-D-glucosamine 6-phosphate + H2O = beta-D-fructose 6-phosphate + NH4(+). Its pathway is amino-sugar metabolism; N-acetylneuraminate degradation; D-fructose 6-phosphate from N-acetylneuraminate: step 5/5. Its function is as follows. Catalyzes the reversible isomerization-deamination of glucosamine 6-phosphate (GlcN6P) to form fructose 6-phosphate (Fru6P) and ammonium ion. This is Glucosamine-6-phosphate deaminase from Latilactobacillus sakei subsp. sakei (strain 23K) (Lactobacillus sakei subsp. sakei).